A 268-amino-acid polypeptide reads, in one-letter code: Small ribosomal subunit protein eS1 (268 aa).

Disordered stretches follow at residues 1–21 (MAVG…KKKV) and 238–268 (GGGK…QEAV).

The protein belongs to the eukaryotic ribosomal protein eS1 family. In terms of assembly, component of the small ribosomal subunit. Mature ribosomes consist of a small (40S) and a large (60S) subunit. The 40S subunit contains about 33 different proteins and 1 molecule of RNA (18S). The 60S subunit contains about 49 different proteins and 3 molecules of RNA (28S, 5.8S and 5S).

It is found in the cytoplasm. Essential for oogenesis; required for late follicle cell development. The sequence is that of Small ribosomal subunit protein eS1 from Drosophila ananassae (Fruit fly).